The chain runs to 354 residues: Mitogen-activated protein kinase kinase 1 (354 aa).

The 261-residue stretch at 68–328 folds into the Protein kinase domain; it reads LEVIKVIGKG…AKELLEHKFV (261 aa). ATP contacts are provided by residues 74–82 and K97; that span reads IGKGSSGNV. Catalysis depends on D190, which acts as the Proton acceptor. T218 carries the post-translational modification Phosphothreonine. S224 carries the post-translational modification Phosphoserine. At T228 the chain carries Phosphothreonine.

It belongs to the protein kinase superfamily. STE Ser/Thr protein kinase family. MAP kinase kinase subfamily. Interacts with MEKK1 and MPK4. May form a ternary complex composed of MEKK1 and MKK1/MKK2 and MPK4. Interacts with P.syringae type III effector HopF2. Interacts with MPK11. Post-translationally, phosphorylation at Thr-218 and Ser-224 by MAP kinase kinase kinases positively regulates kinase activity. In terms of tissue distribution, expressed in roots, stem, flowers and siliques.

It carries out the reaction L-seryl-[protein] + ATP = O-phospho-L-seryl-[protein] + ADP + H(+). The enzyme catalyses L-threonyl-[protein] + ATP = O-phospho-L-threonyl-[protein] + ADP + H(+). It catalyses the reaction L-tyrosyl-[protein] + ATP = O-phospho-L-tyrosyl-[protein] + ADP + H(+). Its activity is regulated as follows. Activated through serine and threonine phosphorylation in response to wounding, cold, drought, salt stresses, abscisic acid (ABA), hydrogen peroxide, bacterial flagellin and laminarin beta-glucan. Functionally, MEKK1, MKK1/MKK2 and MPK4/MPK6 function in a signaling pathway that modulates the expression of genes responding to biotic and abiotic stresses and also plays an important role in pathogen defense by negatively regulating innate immunity. Activates by phosphorylation the downstream MPK4. Acts redundantly with MKK2. MKK1-MPK6 module mediates abscisic acid (ABA)-dependent CAT1 expression with H(2)O(2) production and response to drought and salt stress. MKK1-MPK6 module is also involved in sugar signaling during the process of seed germination. This is Mitogen-activated protein kinase kinase 1 (MKK1) from Arabidopsis thaliana (Mouse-ear cress).